Here is a 353-residue protein sequence, read N- to C-terminus: Major outer membrane protein (353 aa).

An N-terminal signal peptide occupies residues 1-20 (MKKTIVALAVAAVAATSANA).

As to quaternary structure, disulfide bond interactions within and between MOMP molecules and other components form high molecular-weight oligomers.

It is found in the cell outer membrane. Structural rigidity of the outer membrane of elementary bodies and porin forming, permitting diffusion of solutes through the intracellular reticulate body membrane. This Pasteurella multocida protein is Major outer membrane protein (ompH).